Consider the following 135-residue polypeptide: Transcriptional regulator HosA (135 aa).

An HTH marR-type domain is found at 4–134; sequence RNKAFHQLRQ…FVQLVRKMMN (131 aa). The segment at residues 48-71 is a DNA-binding region (H-T-H motif); sequence QVALIEAAVSTKATLAEMLARMEN.

In terms of biological role, involved in the temperature-dependent positive control of flagellum-driven swimming motility and cellular aggregation. Regulates fliC expression by directly interacting with fliC promoter. The chain is Transcriptional regulator HosA (hosA) from Escherichia coli O157:H7.